The chain runs to 289 residues: ATP synthase gamma chain (289 aa).

The protein belongs to the ATPase gamma chain family. F-type ATPases have 2 components, CF(1) - the catalytic core - and CF(0) - the membrane proton channel. CF(1) has five subunits: alpha(3), beta(3), gamma(1), delta(1), epsilon(1). CF(0) has three main subunits: a, b and c.

It is found in the cell inner membrane. Functionally, produces ATP from ADP in the presence of a proton gradient across the membrane. The gamma chain is believed to be important in regulating ATPase activity and the flow of protons through the CF(0) complex. This chain is ATP synthase gamma chain, found in Polynucleobacter necessarius subsp. necessarius (strain STIR1).